The sequence spans 241 residues: Leucyl/phenylalanyl-tRNA--protein transferase (241 aa).

It belongs to the L/F-transferase family.

The protein resides in the cytoplasm. It carries out the reaction N-terminal L-lysyl-[protein] + L-leucyl-tRNA(Leu) = N-terminal L-leucyl-L-lysyl-[protein] + tRNA(Leu) + H(+). The enzyme catalyses N-terminal L-arginyl-[protein] + L-leucyl-tRNA(Leu) = N-terminal L-leucyl-L-arginyl-[protein] + tRNA(Leu) + H(+). The catalysed reaction is L-phenylalanyl-tRNA(Phe) + an N-terminal L-alpha-aminoacyl-[protein] = an N-terminal L-phenylalanyl-L-alpha-aminoacyl-[protein] + tRNA(Phe). Functionally, functions in the N-end rule pathway of protein degradation where it conjugates Leu, Phe and, less efficiently, Met from aminoacyl-tRNAs to the N-termini of proteins containing an N-terminal arginine or lysine. In Neisseria meningitidis serogroup B (strain ATCC BAA-335 / MC58), this protein is Leucyl/phenylalanyl-tRNA--protein transferase.